Consider the following 268-residue polypeptide: Energy-coupling factor transporter transmembrane protein EcfT (268 aa).

5 helical membrane-spanning segments follow: residues 28 to 48, 63 to 83, 107 to 127, 152 to 172, and 248 to 268; these read FVFL…YLWV, LWFL…TLMM, ILEG…ATIM, LPVH…PTLM, and ISLT…YSGV.

Belongs to the energy-coupling factor EcfT family. Forms a stable energy-coupling factor (ECF) transporter complex composed of 2 membrane-embedded substrate-binding proteins (S component), 2 ATP-binding proteins (A component) and 2 transmembrane proteins (T component). May be able to interact with more than 1 S component at a time.

Its subcellular location is the cell membrane. In terms of biological role, transmembrane (T) component of an energy-coupling factor (ECF) ABC-transporter complex. Unlike classic ABC transporters this ECF transporter provides the energy necessary to transport a number of different substrates. The sequence is that of Energy-coupling factor transporter transmembrane protein EcfT from Staphylococcus aureus (strain 04-02981).